The following is a 588-amino-acid chain: Thioredoxin domain-containing protein 3 (588 aa).

The region spanning 2–119 (ASKKREVQLQ…VINLIDEERK (118 aa)) is the Thioredoxin domain. C39 and C42 are disulfide-bonded. 3 NDK regions span residues 157 to 257 (IAII…DQPE), 315 to 455 (LEKT…STLG), and 456 to 588 (LIKP…PEEN). The disordered stretch occupies residues 230 to 261 (GSKHNPPSEETEPQTDTEPNERSEDQPEVEAQ).

This sequence in the C-terminal section; belongs to the NDK family. Monomer. In terms of tissue distribution, testis-specific. Expressed only in primary spermatocytes and round spermatids.

It localises to the cytoplasm. Probably required during the final stages of sperm tail maturation in the testis and/or epididymis, where extensive disulfide bonding of fibrous sheath (FS) proteins occurs. In vitro, it has neither nucleoside diphosphate kinase (NDPK) activity nor reducing activity on disulfide bonds. Exhibits a 3'-5' exonuclease activity with a preference for single-stranded DNA, suggesting roles in DNA proofreading and repair. The sequence is that of Thioredoxin domain-containing protein 3 from Homo sapiens (Human).